The sequence spans 239 residues: Phosphothreonine lyase OspF (239 aa).

The Proton donor role is filled by histidine 104. Lysine 134 serves as the catalytic Proton acceptor.

It belongs to the phosphothreonine lyase family.

It is found in the secreted. In terms of biological role, catalyzes the removal of the phosphate group from the phosphothreonine in the mitogen-activated protein kinases p38, phosphothreonine in the mitogen-activated protein kinases such as MAPK2/ERK2, MAPK3/ERK1, MAPK8 and MAPK14 in an irreversible reaction, thus preventing the downstream phosphorylation of histone H3. This epigenetic modification results in inhibition of the transcription of a specific subset of pro-inflammatory genes, and ultimately to a reduced immune response against the invading pathogen. The diminished immune response enhances the bacterium's ability to disseminate and multiply within the host. The chain is Phosphothreonine lyase OspF (ospF) from Shigella boydii serotype 4 (strain Sb227).